The chain runs to 541 residues: Pseudokinase FAM20A (541 aa).

The first 33 residues, 1 to 33 (MPGLRRDRLLTLLLLGALLSADLYFHLWPQVQR), serve as a signal peptide directing secretion. Positions 38 to 90 (RERPRGCPCTGRASSLARDSAAAASDPGTIVHNFSRTEPRTEPAGGSHSGSSS) are disordered. A compositionally biased stretch (low complexity) spans 49-63 (RASSLARDSAAAASD). 3 N-linked (GlcNAc...) asparagine glycosylation sites follow: Asn-70, Asn-145, and Asn-287. Disulfide bonds link Cys-314–Cys-330, Cys-319–Cys-323, Cys-378–Cys-452, and Cys-453–Cys-512. Asn-388 is a glycosylation site (N-linked (GlcNAc...) asparagine). Residue Asn-538 is glycosylated (N-linked (GlcNAc...) asparagine).

The protein belongs to the FAM20 family. As to quaternary structure, interacts with FAM20C; probably forming a heterotetramer of 2 subunits of FAM20A and 2 subunits of FAM20C. In terms of processing, N-glycosylated. As to expression, highly expressed in lung and liver. Intermediate levels in thymus and ovary.

It is found in the secreted. The protein localises to the golgi apparatus. The protein resides in the endoplasmic reticulum. Its function is as follows. Pseudokinase that acts as an allosteric activator of the Golgi serine/threonine protein kinase FAM20C and is involved in biomineralization of teeth. Forms a complex with FAM20C and increases the ability of FAM20C to phosphorylate the proteins that form the 'matrix' that guides the deposition of the enamel minerals. This chain is Pseudokinase FAM20A, found in Homo sapiens (Human).